Reading from the N-terminus, the 384-residue chain is Glucans biosynthesis protein C (384 aa).

10 helical membrane passes run 17–37 (AWLM…THSW), 54–74 (FIHA…SYML), 91–111 (VGIP…ILLQ), 140–160 (LWFL…FTWF), 173–193 (AISL…YAAI), 212–232 (FIVM…LAFI), 240–260 (FTTP…AYLL), 274–294 (TESV…FSLG), 311–331 (ASLF…AYIT), and 338–358 (LIGF…LYEI).

It belongs to the acyltransferase 3 family. OpgC subfamily.

Its subcellular location is the cell membrane. It participates in glycan metabolism; osmoregulated periplasmic glucan (OPG) biosynthesis. Functionally, necessary for the succinyl substitution of periplasmic glucans. Could catalyze the transfer of succinyl residues from the cytoplasmic side of the membrane to the nascent glucan backbones on the periplasmic side of the membrane. This is Glucans biosynthesis protein C from Salmonella agona (strain SL483).